We begin with the raw amino-acid sequence, 359 residues long: N-acetylhexosamine 1-kinase (359 aa).

Residues 21–359 (VTGIEPYGDG…IVADIMEAAR (339 aa)) form the Protein kinase domain.

Belongs to the protein kinase superfamily. Mg(2+) is required as a cofactor.

The enzyme catalyses N-acetyl-D-hexosamine + ATP = N-acetyl-alpha-D-hexosamine 1-phosphate + ADP + H(+). Functionally, phosphorylates both N-acetylglucosamine (GlcNAc) and N-acetylgalactosamine (GalNAc) at similar rates. Involved in the lacto-N-biose I/galacto-N-biose (LNB/GNB) degradation pathway, which is important for host intestinal colonization by bifidobacteria. Also accepts GTP and ITP as phosphate donors. In vitro, can phosphorylate several GlcNAc and GalNAc derivatives. The polypeptide is N-acetylhexosamine 1-kinase (nahK) (Bifidobacterium longum subsp. longum (strain ATCC 15707 / DSM 20219 / JCM 1217 / NCTC 11818 / E194b)).